Consider the following 484-residue polypeptide: Ribosome biogenesis protein YTM1 (484 aa).

Residues 13 to 95 (VKVTFTTTEA…ESNLTLQYVR (83 aa)) are ubiquitin-like (UBL) domain. WD repeat units follow at residues 122–161 (SPSG…IATS), 168–206 (GHTA…HFSG), 216–255 (GHTG…APEA), 288–328 (IHSA…VVTT), 330–373 (STSH…ATTS), 379–419 (GHAN…PATQ), and 448–484 (GEGC…VVAE).

Belongs to the WD repeat WDR12/YTM1 family. In terms of assembly, component of the NOP7 complex, composed of ERB1, NOP7 and YTM1. The complex is held together by ERB1, which interacts with NOP7 via its N-terminal domain and with YTM1 via a high-affinity interaction between the seven-bladed beta-propeller domains of the 2 proteins. The NOP7 complex associates with the 66S pre-ribosome. Interacts (via UBL domain) with MDN1 (via VWFA/MIDAS domain).

It is found in the nucleus. It localises to the nucleolus. Its subcellular location is the nucleoplasm. In terms of biological role, component of the NOP7 complex, which is required for maturation of the 25S and 5.8S ribosomal RNAs and formation of the 60S ribosome. The chain is Ribosome biogenesis protein YTM1 from Chaetomium globosum (strain ATCC 6205 / CBS 148.51 / DSM 1962 / NBRC 6347 / NRRL 1970) (Soil fungus).